We begin with the raw amino-acid sequence, 267 residues long: MMQRCWRLPVPLGKRGLAVVTHTRQAVVSDNPEAENLDGFEQQYLKERIEITTFQRMLLGAGSSIAAILDPRRHDMIACLGETTGEDALWNIMDTMHESEEGQRIMVEKPRIHTSTIDFKRLESLPADTFGAAYVKFLKDNKVTPDSRMAVRFLEDPKLAYLMTRYRECHDLIHTVLDMPTNMLGEVAVKWVEALNTGLPMCYGGAVFGAVRLRPKQRRAYLKHYLPWALENGKQMKPLMPVYWEERWEQNVNELRAELGIKLLNKF.

The Zn(2+) site is built by His170, Asp171, His174, and Glu186.

The protein belongs to the COQ4 family. Component of a multi-subunit COQ enzyme complex. Zn(2+) is required as a cofactor.

Its subcellular location is the mitochondrion inner membrane. It catalyses the reaction a 4-hydroxy-3-methoxy-5-(all-trans-polyprenyl)benzoate + H(+) = a 2-methoxy-6-(all-trans-polyprenyl)phenol + CO2. It participates in cofactor biosynthesis; ubiquinone biosynthesis. Lyase that catalyzes the C1-decarboxylation of 4-hydroxy-3-methoxy-5-(all-trans-polyprenyl)benzoic acid into 2-methoxy-6-(all-trans-polyprenyl)phenol during ubiquinone biosynthesis. The chain is Ubiquinone biosynthesis protein COQ4 homolog, mitochondrial from Drosophila pseudoobscura pseudoobscura (Fruit fly).